Reading from the N-terminus, the 124-residue chain is Phosphoribosyl-AMP cyclohydrolase (124 aa).

A Mg(2+)-binding site is contributed by D82. C83 lines the Zn(2+) pocket. Positions 84 and 86 each coordinate Mg(2+). Positions 99 and 106 each coordinate Zn(2+).

It belongs to the PRA-CH family. In terms of assembly, homodimer. Mg(2+) is required as a cofactor. Requires Zn(2+) as cofactor.

The protein localises to the cytoplasm. It carries out the reaction 1-(5-phospho-beta-D-ribosyl)-5'-AMP + H2O = 1-(5-phospho-beta-D-ribosyl)-5-[(5-phospho-beta-D-ribosylamino)methylideneamino]imidazole-4-carboxamide. The protein operates within amino-acid biosynthesis; L-histidine biosynthesis; L-histidine from 5-phospho-alpha-D-ribose 1-diphosphate: step 3/9. Its function is as follows. Catalyzes the hydrolysis of the adenine ring of phosphoribosyl-AMP. The sequence is that of Phosphoribosyl-AMP cyclohydrolase from Rhizorhabdus wittichii (strain DSM 6014 / CCUG 31198 / JCM 15750 / NBRC 105917 / EY 4224 / RW1) (Sphingomonas wittichii).